We begin with the raw amino-acid sequence, 300 residues long: Probable protein phosphatase 2C 2 (300 aa).

The region spanning 23–298 (IFAASEMQGW…DNMTTILVYL (276 aa)) is the PPM-type phosphatase domain. 4 residues coordinate Mn(2+): aspartate 57, glycine 58, aspartate 237, and aspartate 289.

It belongs to the PP2C family. Mg(2+) is required as a cofactor. Requires Mn(2+) as cofactor.

The protein localises to the membrane. The enzyme catalyses O-phospho-L-seryl-[protein] + H2O = L-seryl-[protein] + phosphate. It carries out the reaction O-phospho-L-threonyl-[protein] + H2O = L-threonyl-[protein] + phosphate. Functionally, enzyme with a broad specificity. The protein is Probable protein phosphatase 2C 2 of Paramecium tetraurelia.